The primary structure comprises 232 residues: MHSLSERVEQLRLNDCPDWLYLLHEFDALYRQGSDGGSRPIRTHRKRVRDSLALIVEANPAVNDRPPEVKPVTAHLGRALDLGERGAVQGMSRALARVAGRLTWEYGYEKVPKALARKYAYCEILGPRGPICAERLILGFVLFAPSTTYPQHSHKDIEESYISVAGAWSENDAAVHAPGSLILNRPGLEHRITTGDLSPCLLAYAWTGSEERLNQPGMKLSSPRKARIEKGI.

Residues H154, E159, Y161, and H190 each contribute to the a divalent metal cation site.

It belongs to the non-heme iron-dependent dioxygenase family. As to quaternary structure, homodimer. A divalent metal cation serves as cofactor.

It carries out the reaction S,S-dimethyl-beta-propiothetin = acrylate + dimethyl sulfide + H(+). Functionally, may cleave dimethylsulfoniopropionate (DMSP), releasing dimethyl sulfide (DMS). DMS is the principal form by which sulfur is transported from oceans to the atmosphere. The real activity of the protein is however subject to debate and it is unclear whether it constitutes a real dimethylsulfoniopropionate lyase in vivo. This is Putative dimethylsulfoniopropionate lyase DddL (dddL) from Cereibacter sphaeroides (strain ATCC 17023 / DSM 158 / JCM 6121 / CCUG 31486 / LMG 2827 / NBRC 12203 / NCIMB 8253 / ATH 2.4.1.) (Rhodobacter sphaeroides).